Reading from the N-terminus, the 285-residue chain is MRSSVYSENTYNCIRTSKEHLTERRRVAMAPMFQHFLNLCVEKFPESIEHKDTDGNGNFTTAILEREIIYIPEDDTDSIDSVDSLKCINYKLHKSRGDQVLDACVQLIDKHLGAKYRRASRIMYGNRKPWKANKLAEMKSAGLVYVCYWDNGVLGAFTSFMLTEETGLVEGDALHEVSVPVIYLYEVHVASAHRGHGIGRRLLEHALCDGVARHTRRMCDNFFGVALTVFSDNTRARRLYEALGFYRAPGSPAPASPTIRHTRHGGGRVVVPCDPLYYVYCLHMP.

The 187-residue stretch at 88–274 folds into the N-acetyltransferase domain; sequence INYKLHKSRG…GGGRVVVPCD (187 aa). Substrate is bound by residues Tyr-116, 163-165, and Tyr-185; that span reads TEE. Acetyl-CoA is bound by residues 187–189 and 195–200; these read VHV and GHGIGR. Thr-228 lines the substrate pocket. Acetyl-CoA is bound at residue Asn-233.

This sequence belongs to the acetyltransferase family. NAA40 subfamily.

Its subcellular location is the nucleus. It localises to the cytoplasm. The catalysed reaction is N-terminal L-seryl-[histone H4] + acetyl-CoA = N-terminal N(alpha)-acetyl-L-seryl-[histone H4] + CoA + H(+). It carries out the reaction N-terminal L-seryl-[histone H2A] + acetyl-CoA = N-terminal N(alpha)-acetyl-L-seryl-[histone H2A] + CoA + H(+). Functionally, N-alpha-acetyltransferase that specifically mediates the acetylation of the N-terminal residues of histones H4 and H2A. The protein is N-alpha-acetyltransferase 40 of Saccharomyces cerevisiae (strain ATCC 204508 / S288c) (Baker's yeast).